Reading from the N-terminus, the 85-residue chain is Small integral membrane protein 2 (85 aa).

The helical transmembrane segment at 21–43 threads the bilayer; it reads GHAISILFGFWTSFICDTYIVLA. Residues 51-85 are disordered; the sequence is SPDVSASSDEPYARIQQSRRQCHAEEDQSQVPEAG.

It localises to the membrane. The polypeptide is Small integral membrane protein 2 (SMIM2) (Homo sapiens (Human)).